The sequence spans 405 residues: Chalcone synthase (405 aa).

Cysteine 170 is a catalytic residue.

Belongs to the thiolase-like superfamily. Chalcone/stilbene synthases family.

It catalyses the reaction (E)-4-coumaroyl-CoA + 3 malonyl-CoA + 3 H(+) = 2',4,4',6'-tetrahydroxychalcone + 3 CO2 + 4 CoA. It functions in the pathway secondary metabolite biosynthesis; flavonoid biosynthesis. In terms of biological role, the primary product of this enzyme is 4,2',4',6'-tetrahydroxychalcone (also termed naringenin-chalcone or chalcone) which can under specific conditions spontaneously isomerize into naringenin. In Equisetum arvense (Field horsetail), this protein is Chalcone synthase (CHS).